Here is an 89-residue protein sequence, read N- to C-terminus: Inner kinetochore subunit mhf2 (89 aa).

The protein belongs to the CENP-X/MHF2 family. In terms of assembly, the MHF histone-fold complex is a heterotetramer of 2 mhf1-mhf2 heterodimers. Component of the inner kinetochore constitutive centromere-associated network (CCAN) (also known as central kinetochore Sim4 complex in fission yeast), which is composed of at least cnl2, cnp3, cnp20, fta1, fta2, fta3, fta4, fta6, fta7, mal2, mhf1, mhf2, mis6, mis15, mis17, sim4 and wip1.

Its subcellular location is the nucleus. The protein localises to the cytoplasm. In terms of biological role, component of a FANCM-MHF complex that promotes gene conversion at blocked replication forks, probably by reversal of the stalled fork. FANCM-MHF promotes non-crossover recombination. This is Inner kinetochore subunit mhf2 from Schizosaccharomyces pombe (strain 972 / ATCC 24843) (Fission yeast).